Here is a 34-residue protein sequence, read N- to C-terminus: Endoglucanase 1 (34 aa).

The enzyme catalyses Endohydrolysis of (1-&gt;4)-beta-D-glucosidic linkages in cellulose, lichenin and cereal beta-D-glucans.. The sequence is that of Endoglucanase 1 from Sclerotinia sclerotiorum (White mold).